The primary structure comprises 396 residues: F-box protein pof13 (396 aa).

The F-box domain maps to 40-89 (KNSNLFLLNRDIWSLIINYLDAFDILRLMHSSRQFYYWLRKSAVDECCFN).

As to quaternary structure, part of a SCF (SKP1-cullin-F-box) protein ligase complex. Interacts with skp1.

It localises to the cytoplasm. It functions in the pathway protein modification; protein ubiquitination. This is F-box protein pof13 (pof13) from Schizosaccharomyces pombe (strain 972 / ATCC 24843) (Fission yeast).